The following is a 317-amino-acid chain: Taste receptor type 2 member 14 (317 aa).

Topologically, residues 1–7 are extracellular; that stretch reads MGGVIKS. A helical membrane pass occupies residues 8–28; it reads IFTFVLIVEFIIGNLGNSFIA. The Cytoplasmic portion of the chain corresponds to 29 to 55; that stretch reads LVNCIDWVKGRKISSVDRILTALAISR. A helical membrane pass occupies residues 56–76; it reads ISLVWLIFGSWCVSVFFPALF. Residues 77-87 lie on the Extracellular side of the membrane; sequence ATEKMFRMLTN. Residues threonine 86 and tryptophan 89 each contribute to the cholesterol site. The helical transmembrane segment at 88–108 threads the bilayer; that stretch reads IWTVINHFSVWLATGLGTFYF. Residues 109–129 are Cytoplasmic-facing; it reads LKIANFSNSIFLYLKWRVKKV. The helical transmembrane segment at 130-150 threads the bilayer; the sequence is VLVLLLVTSVFLFLNIALINI. At 151 to 184 the chain is on the extracellular side; the sequence is HINASINGYRRNKTCSSDSSNFTRFSSLIVLTST. 3 N-linked (GlcNAc...) asparagine glycosylation sites follow: asparagine 153, asparagine 162, and asparagine 171. A cholesterol-binding site is contributed by valine 180. The helical transmembrane segment at 185–205 threads the bilayer; sequence VFIFIPFTLSLAMFLLLIFSM. Topologically, residues 206-232 are cytoplasmic; that stretch reads WKHRKKMQHTVKISGDASTKAHRGVKS. The helical transmembrane segment at 233–253 threads the bilayer; it reads VITFFLLYAIFSLSFFISVWT. At 254-261 the chain is on the extracellular side; the sequence is SERLEENL. Residues 262 to 282 traverse the membrane as a helical segment; that stretch reads IILSQVMGMAYPSCHSCVLIL. Cholesterol contacts are provided by serine 265 and methionine 268. The Cytoplasmic portion of the chain corresponds to 283–317; the sequence is GNKKLRQASLSVLLWLRYMFKDGEPSGHKEFRESS.

Belongs to the G-protein coupled receptor T2R family. In terms of assembly, core component of the TAS2R14-GNAI1 complex, consisting of TAS2R14, GNAI1, GNB1 and GNG2; within the complex interacts with GNAI1. Core component of the TAS2R14-GNAT3 complex, consisting of TAS2R14, GNAT3, GNB1 and GNG2; within the complex interacts with GNAT3. Core component of the TAS2R14-GNAS2 complex, consisting of TAS2R14, GNAS2, GNB1 and GNG2; within the complex interacts with GNAS2. As to expression, highly expressed in cerebellum, pancreas, small intestine and thymus; also expressed in adipose, aorta, skin and tongue, but at significantly lower levels. Expressed in subsets of taste receptor cells of the tongue and palate epithelium and exclusively in gustducin-positive cells. Expressed in testis.

Its subcellular location is the membrane. It carries out the reaction Ca(2+)(in) = Ca(2+)(out). The enzyme catalyses 3',5'-cyclic AMP(in) = 3',5'-cyclic AMP(out). With respect to regulation, basal activity is enhanced by binding to bitter tastants, such as flufenamic acid and aristolochic acid. Regulated by cholesterol in a concentration-dependent manner. Its function is as follows. Gustducin-linked G-protein coupled receptor that plays a role in the perception of bitterness. The activity of this receptor stimulates GNAT3, activating the gustducin G-protein pathway. Likely plays a role in sensing the chemical composition of the gastrointestinal content and other extra-oral tissues via the inhibitory G-protein pathways. The sequence is that of Taste receptor type 2 member 14 (TAS2R14) from Homo sapiens (Human).